We begin with the raw amino-acid sequence, 61 residues long: MDLRMLYFLIYFAVTHLPSLISLLLTNNYILTLLFIVLHILFIWLPWYTSCFSYSVGSKFT.

The next 2 helical transmembrane spans lie at 5-25 (MLYF…SLLL) and 29-49 (YILT…PWYT).

It is found in the membrane. This is an uncharacterized protein from Saccharomyces cerevisiae (strain ATCC 204508 / S288c) (Baker's yeast).